The primary structure comprises 842 residues: Circularly permutated Ras protein 1 (842 aa).

GTP contacts are provided by residues 62–66, 121–124, and 181–188; these read DTAGQ, NKVD, and GGGGVGKS. The interval 253–274 is disordered; that stretch reads SGKDKQPSPQQAASPSTIDRTG. Residues 259-274 show a composition bias toward polar residues; that stretch reads PSPQQAASPSTIDRTG. A VWFA domain is found at 377–627; sequence IIIYCIDVSG…TQNPMIATDV (251 aa).

Belongs to the small GTPase superfamily. CpRas family.

The sequence is that of Circularly permutated Ras protein 1 (cpras1) from Dictyostelium discoideum (Social amoeba).